Consider the following 104-residue polypeptide: Circadian clock oscillator protein KaiB (104 aa).

It belongs to the KaiB family. In terms of assembly, the KaiABC complex composition changes during the circadian cycle to control KaiC phosphorylation. Complexes KaiC(6), KaiA(2-4):KaiC(6), KaiB(6):KaiC(6) and KaiC(6):KaiB(6):KaiA(12) are among the most important forms, many form cooperatively. Undergoes a major conformational rearrangment; in the free state forms homotetramers as a dimer of dimers. When bound to the CI domain of KaiC switches to a monomeric thioredoxin-fold (KaiB(fs)). KaiB(fs) binds CikA, leading it to dephosphorylate phospho-RpaA.

In terms of biological role, key component of the KaiABC oscillator complex, which constitutes the main circadian regulator in cyanobacteria. Complex composition changes during the circadian cycle to control KaiC phosphorylation. KaiA stimulates KaiC autophosphorylation, while KaiB sequesters KaiA, leading to KaiC autodephosphorylation. Phospho-Ser-431 KaiC accumulation triggers binding of KaiB to form the KaiB(6):KaiC(6) complex, leading to changes in output regulators CikA and SasA. KaiB switches to a thioredoxin-like fold (KaiB(fs)) when bound to KaiC. KaiB(6):KaiC(6) formation exposes a site for KaiA binding that sequesters KaiA from KaiC, making the KaiC(6):KaiB(6):KaiA(12) complex that results in KaiC autodephosphorylation. Functionally, a metamorphic protein which reversibly switches between an inactive tetrameric fold and a rare, thioredoxin-like monomeric fold (KaiB(fs)). KaiB(fs) binds phospho-KaiC, KaiA and CikA. KaiA and CikA compete for binding to KaiB(fs), and KaiB(fs) and SasA compete for binding to KaiC, thus the clock oscillator and output signal pathway are tightly coupled. This Microcystis aeruginosa (strain NIES-843 / IAM M-2473) protein is Circadian clock oscillator protein KaiB.